Consider the following 94-residue polypeptide: NADH-ubiquinone oxidoreductase 10.5 kDa subunit (94 aa).

It belongs to the complex I NDUFA2 subunit family. Complex I is composed of about 40 different subunits.

Its subcellular location is the mitochondrion inner membrane. Functionally, accessory subunit of the mitochondrial membrane respiratory chain NADH dehydrogenase (Complex I), that is believed not to be involved in catalysis. Complex I functions in the transfer of electrons from NADH to the respiratory chain. The immediate electron acceptor for the enzyme is believed to be ubiquinone. The protein is NADH-ubiquinone oxidoreductase 10.5 kDa subunit (nuo-10.5) of Neurospora crassa (strain ATCC 24698 / 74-OR23-1A / CBS 708.71 / DSM 1257 / FGSC 987).